Here is a 173-residue protein sequence, read N- to C-terminus: Protein-export protein SecB (173 aa).

The protein belongs to the SecB family. As to quaternary structure, homotetramer, a dimer of dimers. One homotetramer interacts with 1 SecA dimer.

Its subcellular location is the cytoplasm. Functionally, one of the proteins required for the normal export of preproteins out of the cell cytoplasm. It is a molecular chaperone that binds to a subset of precursor proteins, maintaining them in a translocation-competent state. It also specifically binds to its receptor SecA. This is Protein-export protein SecB from Novosphingobium aromaticivorans (strain ATCC 700278 / DSM 12444 / CCUG 56034 / CIP 105152 / NBRC 16084 / F199).